The following is a 601-amino-acid chain: Glutamine--fructose-6-phosphate aminotransferase [isomerizing] (601 aa).

Cys-2 functions as the Nucleophile; for GATase activity in the catalytic mechanism. One can recognise a Glutamine amidotransferase type-2 domain in the interval 2-218 (CGIVGYIGYD…DHEIVIVKKD (217 aa)). 2 consecutive SIS domains span residues 284–423 (IIND…EHGR) and 453–591 (IATD…VDKP). Lys-596 serves as the catalytic For Fru-6P isomerization activity.

In terms of assembly, homodimer.

It is found in the cytoplasm. It carries out the reaction D-fructose 6-phosphate + L-glutamine = D-glucosamine 6-phosphate + L-glutamate. Functionally, catalyzes the first step in hexosamine metabolism, converting fructose-6P into glucosamine-6P using glutamine as a nitrogen source. The polypeptide is Glutamine--fructose-6-phosphate aminotransferase [isomerizing] (Staphylococcus aureus (strain Mu50 / ATCC 700699)).